We begin with the raw amino-acid sequence, 341 residues long: Phosphoribosylformylglycinamidine cyclo-ligase (341 aa).

The protein belongs to the AIR synthase family.

It is found in the cytoplasm. It carries out the reaction 2-formamido-N(1)-(5-O-phospho-beta-D-ribosyl)acetamidine + ATP = 5-amino-1-(5-phospho-beta-D-ribosyl)imidazole + ADP + phosphate + H(+). It functions in the pathway purine metabolism; IMP biosynthesis via de novo pathway; 5-amino-1-(5-phospho-D-ribosyl)imidazole from N(2)-formyl-N(1)-(5-phospho-D-ribosyl)glycinamide: step 2/2. The protein is Phosphoribosylformylglycinamidine cyclo-ligase of Xanthomonas oryzae pv. oryzae (strain MAFF 311018).